We begin with the raw amino-acid sequence, 1515 residues long: Adhesion G protein-coupled receptor L1 (1515 aa).

An N-terminal signal peptide occupies residues 1 to 24 (MARLAAALWSLCVTTVLVTSATQG). The Extracellular segment spans residues 25–857 (LSRAGLPFGL…EIYQGRINEL (833 aa)). One can recognise an SUEL-type lectin domain in the interval 40–129 (ACEGYPIELR…KYLEVQYDCV (90 aa)). Intrachain disulfides connect cysteine 41–cysteine 71, cysteine 50–cysteine 128, cysteine 83–cysteine 115, cysteine 96–cysteine 102, and cysteine 140–cysteine 322. Glutamate 42 contacts alpha-L-rhamnose. Asparagine 98 carries an N-linked (GlcNAc...) asparagine glycan. Position 117–120 (117–120 (GTYK)) interacts with alpha-L-rhamnose. In terms of domain architecture, Olfactomedin-like spans 139-398 (VCPGTLQKVL…VVRYSLEFGP (260 aa)). The disordered stretch occupies residues 400 to 468 (DPSAGPATSP…APAPSTRRPP (69 aa)). A compositionally biased stretch (low complexity) spans 405-441 (PATSPPLSTTTTARPTPLTSTASPAATTPLRRAPLTT). Over residues 453-468 (DLPPATAPAPSTRRPP) the composition is skewed to pro residues. 2 disulfides stabilise this stretch: cysteine 480–cysteine 515 and cysteine 503–cysteine 532. N-linked (GlcNAc...) asparagine glycans are attached at residues asparagine 531, asparagine 640, asparagine 741, asparagine 800, asparagine 805, and asparagine 826. Positions 669–850 (PARFLAAKQN…AVLMAHREIY (182 aa)) constitute a GAIN-B domain. 2 cysteine pairs are disulfide-bonded: cysteine 801-cysteine 832 and cysteine 820-cysteine 834. The interval 801–850 (CSFWNYSERSMLGYWSTQGCRLVESNKTHTTCACSHLTNFAVLMAHREIY) is GPS. The chain crosses the membrane as a helical span at residues 858 to 878 (LLSVITWVGIVISLVCLAICI). Over 879-892 (STFCFLRGLQTDRN) the chain is Cytoplasmic. The helical transmembrane segment at 893–913 (TIHKNLCINLFLAELLFLVGI) threads the bilayer. At 914-919 (DKTQYE) the chain is on the extracellular side. A helical transmembrane segment spans residues 920 to 940 (VACPIFAGLLHYFFLAAFSWL). Over 941–964 (CLEGVHLYLLLVEVFESEYSRTKY) the chain is Cytoplasmic. A helical transmembrane segment spans residues 965 to 985 (YYLGGYCFPALVVGIAAAIDY). Residues 986 to 1001 (RSYGTEKACWLRVDNY) are Extracellular-facing. Residues 1002 to 1022 (FIWSFIGPVSFVIVVNLVFLM) traverse the membrane as a helical segment. Residues 1023-1049 (VTLHKMIRSSSVLKPDSSRLDNIKSWA) are Cytoplasmic-facing. The chain crosses the membrane as a helical span at residues 1050–1070 (LGAIALLFLLGLTWAFGLLFI). The Extracellular portion of the chain corresponds to 1071–1074 (NKES). The chain crosses the membrane as a helical span at residues 1075–1095 (VVMAYLFTTFNAFQGVFIFVF). At 1096–1515 (HCALQKKVHK…DGQMQLVTSL (420 aa)) the chain is on the cytoplasmic side. The disordered stretch occupies residues 1144–1184 (TQVPGQGRHIHQVSLGPRGRSALPESQKDPGGQSGPGDPLT). An Omega-N-methylarginine modification is found at arginine 1237. The residue at position 1263 (serine 1263) is a Phosphoserine. Disordered stretches follow at residues 1291–1316 (FNNS…RGRN), 1337–1369 (RGAS…PGGA), 1401–1470 (ESES…SRPP), and 1492–1515 (YLAA…VTSL). Pro residues-rich tracts occupy residues 1345 to 1356 (GPPPEPPVPPVP) and 1449 to 1461 (ALPP…PGPP). Phosphoserine is present on residues serine 1497 and serine 1514.

Belongs to the G-protein coupled receptor 2 family. Adhesion G-protein coupled receptor (ADGR) subfamily. As to quaternary structure, forms a heterodimer, consisting of a large extracellular region (p120) non-covalently linked to a seven-transmembrane moiety (p85). Interacts with syntaxin and with proteins of the SHANK family via the PDZ domain. Isoform 2 interacts with TENM2. Interacts (via extracellular domain) with FLRT1, FLRT2 and FLRT3 (via extracellular domain). Autoproteolytically cleaved into 2 subunits, an extracellular subunit and a seven-transmembrane subunit. This proteolytic processing takes place early in the biosynthetic pathway, either in the endoplasmic reticulum or in the early compartment of the Golgi apparatus. Expressed in the brain (at protein level). Brain specific distribution but low levels are also detected in most tissues.

The protein resides in the cell membrane. Its subcellular location is the cell projection. It is found in the axon. It localises to the growth cone. The protein localises to the synapse. The protein resides in the presynaptic cell membrane. Its subcellular location is the synaptosome. Its function is as follows. Calcium-independent receptor of high affinity for alpha-latrotoxin, an excitatory neurotoxin present in black widow spider venom which triggers massive exocytosis from neurons and neuroendocrine cells. Receptor probably implicated in the regulation of exocytosis. Functionally, receptor for TENM2 that mediates heterophilic synaptic cell-cell contact and postsynaptic specialization. The sequence is that of Adhesion G protein-coupled receptor L1 from Rattus norvegicus (Rat).